Consider the following 305-residue polypeptide: Secreted mono- and diacylglycerol lipase A (305 aa).

An N-terminal signal peptide occupies residues 1-26 (MRLSFFTALSAVASLGYALPGKLQSR). 2 cysteine pairs are disulfide-bonded: C62–C67 and C129–C132. Residue S171 is the Nucleophile of the active site. The Charge relay system role is filled by D225. N251 is a glycosylation site (N-linked (GlcNAc...) asparagine). H285 acts as the Charge relay system in catalysis. Residues 303–305 (KRV) constitute a propeptide, removed in mature form.

It belongs to the AB hydrolase superfamily. Lipase family. Class 3 subfamily. In terms of processing, multiple forms of this lipase are due to the presence of different carbohydrates, which may contribute to the stability of this lipase but not to the enzyme activity.

It is found in the secreted. It carries out the reaction a monoacylglycerol + H2O = glycerol + a fatty acid + H(+). The enzyme catalyses a diacylglycerol + H2O = a monoacylglycerol + a fatty acid + H(+). With respect to regulation, both Fe(3+) and Hg(2+) inhibit the activity significantly. In terms of biological role, secreted lipase strictly specific to mono- and diacylglycerol, but not triacylglycerol. Hydrolyzes long-chain monoacylglycerols most efficiently with the highest activities observed on 1- and 3- monopalmitoyl-sn-glycerol or 1-monostearoyl-rac-glycerol. Prefers to attack alpha positions to beta positions of monoacylglycerol, but shows no stereospecificity on mono- and diacylglycerol. In Penicillium camembertii, this protein is Secreted mono- and diacylglycerol lipase A.